A 277-amino-acid chain; its full sequence is Phosphoribosylaminoimidazole-succinocarboxamide synthase (277 aa).

Belongs to the SAICAR synthetase family.

It catalyses the reaction 5-amino-1-(5-phospho-D-ribosyl)imidazole-4-carboxylate + L-aspartate + ATP = (2S)-2-[5-amino-1-(5-phospho-beta-D-ribosyl)imidazole-4-carboxamido]succinate + ADP + phosphate + 2 H(+). The protein operates within purine metabolism; IMP biosynthesis via de novo pathway; 5-amino-1-(5-phospho-D-ribosyl)imidazole-4-carboxamide from 5-amino-1-(5-phospho-D-ribosyl)imidazole-4-carboxylate: step 1/2. The chain is Phosphoribosylaminoimidazole-succinocarboxamide synthase from Salinispora arenicola (strain CNS-205).